The sequence spans 129 residues: MINWKLFLAAGLLLTITALSIVVRFQYVENSRLKLANQSLSAERDAARAQFTHYEQAVDIFNTIAGATQDAHQQAIQASQPQTIKIQEAITPERCAHLPVPTAAVNRLRAHADKISPRAASAHSSNVTR.

This chain is Putative protein p14 (14), found in Acyrthosiphon pisum secondary endosymbiont phage 1 (Bacteriophage APSE-1).